A 229-amino-acid chain; its full sequence is Probable GTP-binding protein EngB (229 aa).

In terms of domain architecture, EngB-type G spans 53–228; the sequence is DLPEVAFAGR…RAEIVRLCID (176 aa). Residues 61 to 68, 88 to 92, 106 to 109, 173 to 176, and 207 to 209 contribute to the GTP site; these read GRSNVGKS, GRTRE, DLPG, TKAD, and TSS. 2 residues coordinate Mg(2+): S68 and T90.

The protein belongs to the TRAFAC class TrmE-Era-EngA-EngB-Septin-like GTPase superfamily. EngB GTPase family. Mg(2+) is required as a cofactor.

In terms of biological role, necessary for normal cell division and for the maintenance of normal septation. This Caulobacter vibrioides (strain NA1000 / CB15N) (Caulobacter crescentus) protein is Probable GTP-binding protein EngB.